A 163-amino-acid polypeptide reads, in one-letter code: Nucleotide-binding protein HS_0688 (163 aa).

It belongs to the YajQ family.

In terms of biological role, nucleotide-binding protein. This chain is Nucleotide-binding protein HS_0688, found in Histophilus somni (strain 129Pt) (Haemophilus somnus).